The following is a 564-amino-acid chain: Esterase FE4 (564 aa).

The first 23 residues, 1 to 23 (MKNTCGILLNLFLFIGCFLTCSA), serve as a signal peptide directing secretion. An N-linked (GlcNAc...) asparagine glycan is attached at asparagine 81. Cysteine 89 and cysteine 106 form a disulfide bridge. Serine 214 functions as the Acyl-ester intermediate in the catalytic mechanism. Cysteine 266 and cysteine 277 are joined by a disulfide. Asparagine 269 carries N-linked (GlcNAc...) asparagine glycosylation. The Charge relay system role is filled by glutamate 339. 3 N-linked (GlcNAc...) asparagine glycosylation sites follow: asparagine 371, asparagine 404, and asparagine 443. Catalysis depends on histidine 463, which acts as the Charge relay system.

Belongs to the type-B carboxylesterase/lipase family.

The enzyme catalyses a carboxylic ester + H2O = an alcohol + a carboxylate + H(+). Overproduction of nonspecific esterases is a common mechanism of resistance to organophosphate insecticides. This Myzus persicae (Green peach aphid) protein is Esterase FE4.